Reading from the N-terminus, the 425-residue chain is MNIISVGVNHKTAPIEIRERISLSEVQNKEFITGLISSGLAHEAMVVSTCNRTELYVVPAIYEVNGEFLKEYLISFKDARKEVRPEHFFSRFYCGTARHIFEVASAIDSLVLGEGQILGQVKNAYRIAAETQCAGILITRLCHTAFSVAKKVKTKTKIMEGAVSVSYAAVELAQKIFSNLSMKKVLLVGAGETGELAAKHMFQKNARNIVITNRTLSKAETLAEELGTNKVLPFETFREHLHEFDIIITAISTKEYVLNEAEMHQSMIKRRLKPVIILDLGLPRNVDPDVSKLQNMFLKDIDALKHIIDKNLEKRSRELPKVNAIIEEELIAFGQWINTLKVRPTIVDLQSKFIEIKEKELERYRYKVSEEELQRMEHLTDRILKKILHHPIKMLKAPIDTTDSIPSRVNLVRNVFDLEEPNQSH.

Substrate contacts are provided by residues 49 to 52 (TCNR), Ser-109, 114 to 116 (EGQ), and Gln-120. Cys-50 serves as the catalytic Nucleophile. Residue 189–194 (GAGETG) participates in NADP(+) binding.

The protein belongs to the glutamyl-tRNA reductase family. Homodimer.

It carries out the reaction (S)-4-amino-5-oxopentanoate + tRNA(Glu) + NADP(+) = L-glutamyl-tRNA(Glu) + NADPH + H(+). The protein operates within porphyrin-containing compound metabolism; protoporphyrin-IX biosynthesis; 5-aminolevulinate from L-glutamyl-tRNA(Glu): step 1/2. It functions in the pathway porphyrin-containing compound metabolism; chlorophyll biosynthesis. Catalyzes the NADPH-dependent reduction of glutamyl-tRNA(Glu) to glutamate 1-semialdehyde (GSA). The chain is Glutamyl-tRNA reductase from Pelodictyon phaeoclathratiforme (strain DSM 5477 / BU-1).